Here is a 280-residue protein sequence, read N- to C-terminus: UPF0750 membrane protein YitT (280 aa).

4 helical membrane-spanning segments follow: residues 9–29, 54–74, 80–100, and 151–171; these read LLIV…FLIP, FYIS…ILGW, SFTV…GILP, and VGTY…LLQG.

Belongs to the UPF0750 family.

It is found in the cell membrane. The protein is UPF0750 membrane protein YitT (yitT) of Bacillus subtilis (strain 168).